The chain runs to 71 residues: UPF0346 protein Sez_1447 (71 aa).

The protein belongs to the UPF0346 family.

The polypeptide is UPF0346 protein Sez_1447 (Streptococcus equi subsp. zooepidemicus (strain MGCS10565)).